A 214-amino-acid chain; its full sequence is Orotate phosphoribosyltransferase (214 aa).

5-phospho-alpha-D-ribose 1-diphosphate-binding positions include R125, K126, K129, H131, and 151 to 159; that span reads EDTSTTGNS. 2 residues coordinate orotate: T155 and R183.

It belongs to the purine/pyrimidine phosphoribosyltransferase family. PyrE subfamily. Homodimer. Requires Mg(2+) as cofactor.

The enzyme catalyses orotidine 5'-phosphate + diphosphate = orotate + 5-phospho-alpha-D-ribose 1-diphosphate. It functions in the pathway pyrimidine metabolism; UMP biosynthesis via de novo pathway; UMP from orotate: step 1/2. Its function is as follows. Catalyzes the transfer of a ribosyl phosphate group from 5-phosphoribose 1-diphosphate to orotate, leading to the formation of orotidine monophosphate (OMP). The sequence is that of Orotate phosphoribosyltransferase from Tropheryma whipplei (strain Twist) (Whipple's bacillus).